The chain runs to 126 residues: Holo-[acyl-carrier-protein] synthase (126 aa).

Positions 9 and 58 each coordinate Mg(2+).

The protein belongs to the P-Pant transferase superfamily. AcpS family. Requires Mg(2+) as cofactor.

It is found in the cytoplasm. The catalysed reaction is apo-[ACP] + CoA = holo-[ACP] + adenosine 3',5'-bisphosphate + H(+). In terms of biological role, transfers the 4'-phosphopantetheine moiety from coenzyme A to a Ser of acyl-carrier-protein. The chain is Holo-[acyl-carrier-protein] synthase from Vibrio campbellii (strain ATCC BAA-1116).